The following is a 197-amino-acid chain: MVPPITSDEFCETSGCFGDSANLHTTLERLKININSDAKKLVDTNGDLKKHQRFLRIAKVTSLRSKDPNTQVGCVIVDKDNCIVSVGYNGFPIGVDDDVFRWDKEDPEDNKHLYVVHAEMNAIINKRCTTLHDCTVYVTLFPCNKCAQMLIQSRVKKVYFLENRDELAFRASKKMLDHARLPYEQIVMPQEAYVIEL.

In terms of domain architecture, CMP/dCMP-type deaminase spans 49 to 183 (KKHQRFLRIA…KMLDHARLPY (135 aa)). A Zn(2+)-binding site is contributed by histidine 117. Glutamate 119 acts as the Proton donor in catalysis. Residues cysteine 143 and cysteine 146 each contribute to the Zn(2+) site.

Belongs to the cytidine and deoxycytidylate deaminase family. Requires Zn(2+) as cofactor.

The catalysed reaction is dCMP + H2O + H(+) = dUMP + NH4(+). Its function is as follows. Supplies the nucleotide substrate for thymidylate synthetase. The protein is Probable deoxycytidylate deaminase of Caenorhabditis elegans.